A 651-amino-acid chain; its full sequence is Probable inactive purple acid phosphatase 9 (651 aa).

A signal peptide spans 1-20 (MIAAVYTLFFFFLLISSVYS). N-linked (GlcNAc...) asparagine glycans are attached at residues asparagine 32, asparagine 96, and asparagine 202. The Fe cation site is built by aspartate 305 and tyrosine 308. Aspartate 305 is a Zn(2+) binding site. Asparagine 338 is a Zn(2+) binding site. Position 338 (asparagine 338) interacts with substrate. Asparagine 378 and asparagine 432 each carry an N-linked (GlcNAc...) asparagine glycan. Position 444 (histidine 444) interacts with Zn(2+). An N-linked (GlcNAc...) asparagine glycan is attached at asparagine 475. Histidine 483 is a binding site for Zn(2+). A substrate-binding site is contributed by 483-485 (HVH). A Fe cation-binding site is contributed by histidine 485. N-linked (GlcNAc...) asparagine glycans are attached at residues asparagine 495 and asparagine 640.

This sequence belongs to the metallophosphoesterase superfamily. Purple acid phosphatase family. As to quaternary structure, homodimer. Fe cation serves as cofactor. Zn(2+) is required as a cofactor. In terms of tissue distribution, expressed in roots, stems, leaves, flowers and siliques.

It is found in the secreted. The protein is Probable inactive purple acid phosphatase 9 (PAP9) of Arabidopsis thaliana (Mouse-ear cress).